The following is a 312-amino-acid chain: Protoheme IX farnesyltransferase (312 aa).

9 helical membrane-spanning segments follow: residues 29-49, 50-70, 90-110, 117-137, 150-170, 177-197, 223-243, 246-266, and 292-312; these read VMSLVVFTGLVGLVLAPGHMN, PVLAVISILCIAVGAGASGAL, IPAGIIAPNQVLAFGLTLSAF, LMVNWLAAALLAFTIFFYAVI, IVIGGAAGAFPPMIGWAAATG, LVLFMIIFLWTPPHFWALSLF, ALFYAVLMAPVGVLPWVMGFA, FYGVVSTLLGLAFVYYAWRLW, and IFAVLLFEALTFKLLAAFGVF.

This sequence belongs to the UbiA prenyltransferase family. Protoheme IX farnesyltransferase subfamily.

It localises to the cell inner membrane. The catalysed reaction is heme b + (2E,6E)-farnesyl diphosphate + H2O = Fe(II)-heme o + diphosphate. It participates in porphyrin-containing compound metabolism; heme O biosynthesis; heme O from protoheme: step 1/1. In terms of biological role, converts heme B (protoheme IX) to heme O by substitution of the vinyl group on carbon 2 of heme B porphyrin ring with a hydroxyethyl farnesyl side group. This chain is Protoheme IX farnesyltransferase, found in Brucella melitensis biotype 1 (strain ATCC 23456 / CCUG 17765 / NCTC 10094 / 16M).